A 227-amino-acid polypeptide reads, in one-letter code: Ion-translocating oxidoreductase complex subunit E (227 aa).

Transmembrane regions (helical) follow at residues 57–77 (LGLG…ISLF), 89–109 (IYVM…NAFA), 111–131 (PVYQ…IVIG), 146–166 (AFDG…LGAI), and 200–220 (GLLL…ILAV).

It belongs to the NqrDE/RnfAE family. As to quaternary structure, the complex is composed of six subunits: RnfA, RnfB, RnfC, RnfD, RnfE and RnfG.

It localises to the cell inner membrane. Its function is as follows. Part of a membrane-bound complex that couples electron transfer with translocation of ions across the membrane. The protein is Ion-translocating oxidoreductase complex subunit E of Haemophilus ducreyi (strain 35000HP / ATCC 700724).